The following is a 481-amino-acid chain: Ras-GEF domain-containing family member 1A (481 aa).

The N-terminal Ras-GEF domain maps to 41 to 170 (QDGHLISGSL…AIAQMTQSLL (130 aa)). One can recognise a Ras-GEF domain in the interval 214-461 (DPLVLAQQLT…FVASFESEGP (248 aa)).

Detected in brain and spinal cord. Highly expressed in a number of intrahepatic cholangiocarcinoma tissue biopsies.

Functionally, guanine nucleotide exchange factor (GEF) with specificity for RAP2A, KRAS, HRAS, and NRAS (in vitro). Plays a role in cell migration. This chain is Ras-GEF domain-containing family member 1A (RASGEF1A), found in Homo sapiens (Human).